The primary structure comprises 342 residues: tRNA N6-adenosine threonylcarbamoyltransferase (342 aa).

Positions 115 and 119 each coordinate Fe cation. Residues 138-142 (LVSGG), aspartate 171, glycine 184, and asparagine 276 contribute to the substrate site. Aspartate 304 contacts Fe cation.

It belongs to the KAE1 / TsaD family. It depends on Fe(2+) as a cofactor.

Its subcellular location is the cytoplasm. The enzyme catalyses L-threonylcarbamoyladenylate + adenosine(37) in tRNA = N(6)-L-threonylcarbamoyladenosine(37) in tRNA + AMP + H(+). Required for the formation of a threonylcarbamoyl group on adenosine at position 37 (t(6)A37) in tRNAs that read codons beginning with adenine. Is involved in the transfer of the threonylcarbamoyl moiety of threonylcarbamoyl-AMP (TC-AMP) to the N6 group of A37, together with TsaE and TsaB. TsaD likely plays a direct catalytic role in this reaction. This is tRNA N6-adenosine threonylcarbamoyltransferase from Dichelobacter nodosus (strain VCS1703A).